Here is a 236-residue protein sequence, read N- to C-terminus: Ribosome-inactivating protein saporin-3 (236 aa).

Glu-148 is an active-site residue.

The protein belongs to the ribosome-inactivating protein family. Type 1 RIP subfamily.

It catalyses the reaction Endohydrolysis of the N-glycosidic bond at one specific adenosine on the 28S rRNA.. Functionally, ribosome-inactivating protein of type 1, inhibits protein synthesis in animal cells. Useful as immunotoxin for pharmacological applications. This chain is Ribosome-inactivating protein saporin-3 (SAP3), found in Saponaria officinalis (Common soapwort).